A 301-amino-acid chain; its full sequence is Ribosomal RNA small subunit methyltransferase H (301 aa).

S-adenosyl-L-methionine is bound by residues 33–35 (GGH), Asp-52, Phe-79, Asp-100, and Gln-107.

The protein belongs to the methyltransferase superfamily. RsmH family.

It is found in the cytoplasm. It catalyses the reaction cytidine(1402) in 16S rRNA + S-adenosyl-L-methionine = N(4)-methylcytidine(1402) in 16S rRNA + S-adenosyl-L-homocysteine + H(+). Specifically methylates the N4 position of cytidine in position 1402 (C1402) of 16S rRNA. This Mycoplasmopsis synoviae (strain 53) (Mycoplasma synoviae) protein is Ribosomal RNA small subunit methyltransferase H.